A 325-amino-acid polypeptide reads, in one-letter code: DDB1- and CUL4-associated factor 7 homolog (325 aa).

WD repeat units lie at residues E62–K104, E115–Q155, A158–I197, and F247–E287.

The protein belongs to the WD repeat DCAF7 family.

This chain is DDB1- and CUL4-associated factor 7 homolog (wdr68), found in Dictyostelium discoideum (Social amoeba).